A 121-amino-acid chain; its full sequence is CRISPR system Cms protein Csm2 (121 aa).

This sequence belongs to the CRISPR-associated Csm2 family. As to quaternary structure, part of the Csm effector complex that includes at least Cas10(1), Csm2(3), Csm3(5), Csm4(1), Csm5(1) and mature crRNA. The Csm complex is elongated and slightly twisted with a maximal length of 215 Angstroms and a diameter of 75-80 Angstroms. It has been modeled to have a central protein filamant of Csm3 subunits along which the dsRNA helix of paired crRNA and target RNA binds. The filament is capped at one end by Cas10 and Csm4 and at the other end by Csm5; ssDNA is thought to bind to the N-terminal HD domain of Cas10. Csm with a precursor crRNA does not include Csm5, while Cas6, the enzyme probably involved in pre-crRNA processing, is found associated with a subset of the Csm complex.

CRISPR (clustered regularly interspaced short palindromic repeat) is an adaptive immune system that provides protection against mobile genetic elements (viruses, transposable elements and conjugative plasmids). CRISPR clusters contain spacers, sequences complementary to antecedent mobile elements, and target invading nucleic acids. CRISPR clusters are transcribed and processed into CRISPR RNA (crRNA). The type III-A Csm effector complex binds crRNA and acts as a crRNA-guided RNase, DNase and cyclic oligoadenylate synthase; binding of target RNA cognate to the crRNA is required for all activities. In a heterologous host this Csm effector complex restricts ssRNA phage MS2, suggesting it may target RNA viruses in vivo. Functionally, csm functions as a non-specific ssDNase. Base-pairing between crRNA and target RNA to form a ternary Csm complex activates a ssDNase activity; target RNA cleavage suppresses the ssDNase, a temporal control that prevents uncontrolled DNA degradation. Viral RNA transcripts probably tether the Csm complex to the viral genome, recruiting Cas10 ssDNA activity which is able to degrade DNA in the transcription bubble, spatially controlling the DNase activity. In terms of biological role, this subunit may be involved in monitoring complementarity of crRNA and target RNA. In Streptococcus thermophilus, this protein is CRISPR system Cms protein Csm2.